The chain runs to 945 residues: Splicing factor, suppressor of white-apricot homolog (945 aa).

Disordered stretches follow at residues 1 to 28 and 157 to 190; these read MYGA…GTGT and YYDP…PFIA. Composition is skewed to basic and acidic residues over residues 9 to 21 and 169 to 178; these read AKAE…KEEA and PSKQREKSEA. The stretch at 211–253 is one SURP motif 1 repeat; that stretch reads IIERTANFVCKQGAQFEIMLKAKQARNSQFDFLRFDHYLNPYY. A disordered region spans residues 269–298; that stretch reads AESKSEEKKKSGPTSDNEEEDDEEDGSYLH. Ser283 carries the post-translational modification Phosphoserine. Acidic residues predominate over residues 284 to 294; the sequence is DNEEEDDEEDG. Lys315 carries the N6-acetyllysine modification. Disordered regions lie at residues 332–355 and 403–438; these read KAQA…PSQV and SSSP…STTT. The span at 335 to 352 shows a compositional bias: low complexity; that stretch reads ADSSAPAPPTADGTPAQP. The segment covering 412-425 has biased composition (pro residues); that stretch reads VPPPPGTTPPPPPT. The segment covering 426-438 has biased composition (low complexity); it reads TAESSSGVTSTTT. The stretch at 458-498 is one SURP motif 2 repeat; the sequence is VIDKLAEYVARNGLKFETSVRAKNDQRFEFLQPWHQYNAYY. 3 disordered regions span residues 512–566, 589–680, and 714–921; these read GSTQ…TVDG, PLEK…QAER, and GVMP…VQSK. Residues 514–527 are compositionally biased toward low complexity; the sequence is TQAASTAEEAPTET. The span at 528 to 540 shows a compositional bias: acidic residues; sequence AVEESSEAGEDGA. Over residues 589–598 the composition is skewed to basic and acidic residues; the sequence is PLEKNRVKLD. A phosphoserine mark is found at Ser601 and Ser621. A compositionally biased stretch (low complexity) spans 615–630; sequence SSVANPSPAAAPPSAV. The stretch at 632–686 forms a coiled coil; that stretch reads EEKKPQLTQEELEAKQAKQKLEDRLAAAAREKLAQASKESKEKQLQAERKRKAAL. The residue at position 639 (Thr639) is a Phosphothreonine. 2 stretches are compositionally biased toward basic and acidic residues: residues 643–679 and 733–752; these read LEAK…LQAE and KPPE…EERE. Basic residues-rich tracts occupy residues 753 to 787 and 795 to 810; these read KKKK…KAKH and TVRR…RRRA. Positions 811-821 are enriched in basic and acidic residues; it reads HSPERRREDRS. 2 positions are modified to phosphoserine: Ser829 and Ser831. A compositionally biased stretch (basic residues) spans 835 to 861; sequence SRKRTRSRSPHEKKKKRRSRSRTKAKA. Residues 871 to 894 show a composition bias toward low complexity; the sequence is QAAQRPSAHSAHSASISPVESRGS. Basic and acidic residues predominate over residues 895 to 908; the sequence is SQERSRGVSQEKDG. Residues Ser899 and Ser903 each carry the phosphoserine modification. The segment covering 909 to 920 has biased composition (low complexity); that stretch reads QISSAIVSSVQS.

It localises to the nucleus. Functionally, plays a role as an alternative splicing regulator. Regulate its own expression at the level of RNA processing. Also regulates the splicing of fibronectin and CD45 genes. May act, at least in part, by interaction with other R/S-containing splicing factors. Represses the splicing of MAPT/Tau exon 10. The chain is Splicing factor, suppressor of white-apricot homolog (Sfswap) from Rattus norvegicus (Rat).